Consider the following 476-residue polypeptide: Aspartyl/glutamyl-tRNA(Asn/Gln) amidotransferase subunit B (476 aa).

The protein belongs to the GatB/GatE family. GatB subfamily. In terms of assembly, heterotrimer of A, B and C subunits.

It catalyses the reaction L-glutamyl-tRNA(Gln) + L-glutamine + ATP + H2O = L-glutaminyl-tRNA(Gln) + L-glutamate + ADP + phosphate + H(+). The enzyme catalyses L-aspartyl-tRNA(Asn) + L-glutamine + ATP + H2O = L-asparaginyl-tRNA(Asn) + L-glutamate + ADP + phosphate + 2 H(+). Its function is as follows. Allows the formation of correctly charged Asn-tRNA(Asn) or Gln-tRNA(Gln) through the transamidation of misacylated Asp-tRNA(Asn) or Glu-tRNA(Gln) in organisms which lack either or both of asparaginyl-tRNA or glutaminyl-tRNA synthetases. The reaction takes place in the presence of glutamine and ATP through an activated phospho-Asp-tRNA(Asn) or phospho-Glu-tRNA(Gln). This is Aspartyl/glutamyl-tRNA(Asn/Gln) amidotransferase subunit B from Clostridium botulinum (strain 657 / Type Ba4).